The sequence spans 501 residues: Aldehyde dehydrogenase, cytosolic 1 (501 aa).

Position 246-251 (246-251) interacts with NAD(+); the sequence is GSTEVG. Glu269 (proton acceptor) is an active-site residue. The Nucleophile role is filled by Cys303.

It belongs to the aldehyde dehydrogenase family. As to quaternary structure, homotetramer. Eye specific, with very high expression in the lens.

Its subcellular location is the cytoplasm. The enzyme catalyses an aldehyde + NAD(+) + H2O = a carboxylate + NADH + 2 H(+). The protein operates within alcohol metabolism; ethanol degradation; acetate from ethanol: step 2/2. Functionally, major component of the eye of elephant shrews, which in contrast to other mammals, possesses both a lens- and a non-lens class-1 aldehyde dehydrogenase 1. This eye-specific form is a structural protein of the lens and, in other part of the eye, serves as the major form of ALDH1. Can convert/oxidize retinaldehyde to retinoic acid. This chain is Aldehyde dehydrogenase, cytosolic 1 (ALDH1), found in Elephantulus edwardii (Cape long-eared elephant shrew).